The primary structure comprises 130 residues: L-ectoine synthase (130 aa).

This sequence belongs to the ectoine synthase family.

The catalysed reaction is (2S)-4-acetamido-2-aminobutanoate = L-ectoine + H2O. It participates in amine and polyamine biosynthesis; ectoine biosynthesis; L-ectoine from L-aspartate 4-semialdehyde: step 3/3. Catalyzes the circularization of gamma-N-acetyl-alpha,gamma-diaminobutyric acid (ADABA) to ectoine (1,4,5,6-tetrahydro-2-methyl-4-pyrimidine carboxylic acid), which is an excellent osmoprotectant. The sequence is that of L-ectoine synthase from Mycolicibacterium vanbaalenii (strain DSM 7251 / JCM 13017 / BCRC 16820 / KCTC 9966 / NRRL B-24157 / PYR-1) (Mycobacterium vanbaalenii).